The sequence spans 449 residues: MSKEISFDTIEDFTSNLSKHPAYGVAANAAQTNGIFKASQSTQSKVDLDPTFSVEIDTGSVTNQKQSGRCWMFSALNTMRHSIQKEFKLKGFELSQSYTFFWDKFEKSNFFFENVIGSADKPLGDRKVSFLFATPQSDGGQWDMLCGLIEKYGIVPKKVYPETANSENSRALNDTLNTMLRKGGLELRALVNEGKSTEEVEAHKAELLDAIFRMLATSLGLPPKSFNFEYTDDDGNYHIDKDITPQDFFKKYVGWDLENYISVINGPTADKPYNKVFSVEYLGNVVGGRQVRHLNLELSKFKELIINQLKQGEVVWFGSDVSKGGDREAGLLDTKIYQRDQLFDYDFSMSKADRLDSGESMMNHAMVITAVDLVDDKPTKWKIENSWGDKSGFKGYFVMSDEWFDQFVYQAVLNKAFLPEDVKKAYDEGKENPIELLPWDPMGALAFDF.

Active-site residues include Cys70, His364, and Asn385.

Belongs to the peptidase C1 family. Homohexamer.

The protein localises to the cytoplasm. The enzyme catalyses Inactivates bleomycin B2 (a cytotoxic glycometallopeptide) by hydrolysis of a carboxyamide bond of beta-aminoalanine, but also shows general aminopeptidase activity. The specificity varies somewhat with source, but amino acid arylamides of Met, Leu and Ala are preferred.. The polypeptide is Aminopeptidase C (pepC) (Lactobacillus delbrueckii subsp. lactis).